The chain runs to 380 residues: Cytochrome b (380 aa).

The next 4 helical transmembrane spans lie at 34–54 (FGSLLGICLLTQILTGLLLAT), 78–99 (WLIRNLHANGASFFFICIYLHI), 114–134 (WNTGVILLLALMATAFVGYVL), and 179–199 (FFALHFLLPFMIAGLALIHLT). Residues His-84 and His-98 each contribute to the heme b site. 2 residues coordinate heme b: His-183 and His-197. Residue His-202 coordinates a ubiquinone. 4 helical membrane passes run 227-247 (LKDILGFIIMFLPLTTLALFS), 289-309 (LGGVLALAASVLVLFLAPLLH), 321-341 (FSQFLFWTLAANLFILTWVGS), and 348-368 (FIIIGQLASLTYFTILLLLFP).

The protein belongs to the cytochrome b family. In terms of assembly, the cytochrome bc1 complex contains 11 subunits: 3 respiratory subunits (MT-CYB, CYC1 and UQCRFS1), 2 core proteins (UQCRC1 and UQCRC2) and 6 low-molecular weight proteins (UQCRH/QCR6, UQCRB/QCR7, UQCRQ/QCR8, UQCR10/QCR9, UQCR11/QCR10 and a cleavage product of UQCRFS1). This cytochrome bc1 complex then forms a dimer. Heme b serves as cofactor.

The protein resides in the mitochondrion inner membrane. In terms of biological role, component of the ubiquinol-cytochrome c reductase complex (complex III or cytochrome b-c1 complex) that is part of the mitochondrial respiratory chain. The b-c1 complex mediates electron transfer from ubiquinol to cytochrome c. Contributes to the generation of a proton gradient across the mitochondrial membrane that is then used for ATP synthesis. The chain is Cytochrome b (MT-CYB) from Alca torda (Razorbill).